The chain runs to 189 residues: Class A basic helix-loop-helix protein 15 (189 aa).

Residues 1 to 12 (MKTKNRPPRRRA) show a composition bias toward basic residues. Disordered stretches follow at residues 1–85 (MKTK…ERER) and 167–189 (TEAQ…REGT). Residue Thr-25 is modified to Phosphothreonine. Basic and acidic residues predominate over residues 68 to 85 (GRRDSSIQRRLESNERER). The bHLH domain maps to 75–127 (QRRLESNERERQRMHKLNNAFQALREVIPHVRADKKLSKIETLTLAKNYIKSL).

As to quaternary structure, forms homodimers or heterodimers with TCF3 gene products E12 and E47. These dimers bind to the E-box site, however, heterodimer with MYOD1 does not bind target DNA. In terms of tissue distribution, expressed in brain, liver, spleen and skeletal muscle.

It localises to the nucleus. In terms of biological role, plays a role in controlling the transcriptional activity of MYOD1, ensuring that expanding myoblast populations remain undifferentiated. Repression may occur through muscle-specific E-box occupancy by homodimers. May also negatively regulate bHLH-mediated transcription through an N-terminal repressor domain. Serves as a key regulator of acinar cell function, stability, and identity. Also required for normal organelle localization in exocrine cells and for mitochondrial calcium ion transport. May function as a unique regulator of gene expression in several different embryonic and postnatal cell lineages. Binds to the E-box consensus sequence 5'-CANNTG-3'. In Homo sapiens (Human), this protein is Class A basic helix-loop-helix protein 15 (BHLHA15).